Reading from the N-terminus, the 189-residue chain is MTSPSIESGARERTRRAILDAAMLVLADHPTAALGDIAAAAGVGRSTVHRYYPERTDLLRALARHVHDLSNAAIERADPTSGPVDAALRRVVESQLDLGPIVLFVYYEPSILADPELAAYFDIGDEAIVEVLNRASTERPEYPPGWARRVFWALMQAGYEAAKDGMPRHQIVDAIMTSLTSGIITLPRT.

In terms of domain architecture, HTH tetR-type spans 12 to 70 (ERTRRAILDAAMLVLADHPTAALGDIAAAAGVGRSTVHRYYPERTDLLRALARHVHDLS). A DNA-binding region (H-T-H motif) is located at residues 33 to 52 (ALGDIAAAAGVGRSTVHRYY). Residues 70–71 (SN) are proflavine binding.

As to quaternary structure, homodimer. Forms a structurally asymmetric homodimer exhibiting local unfolding and a blocked drug-binding site.

Repressor activity is regulated by binding of different substrates of the LfrA multidrug efflux pump, such as acriflavine, proflavine, ethidium bromide and rhodamine 123. Binding of these ligands causes the dissociation of LfrR from the promoter, inducing lfrA expression. Represses the transcription of the lfrRA operon by binding directly to the promoter region of lfrR-lfrA. Binds specifically to a 143-bp region upstream of the lfrR gene. The sequence is that of HTH-type transcriptional repressor LfrR from Mycolicibacterium smegmatis (strain ATCC 700084 / mc(2)155) (Mycobacterium smegmatis).